A 906-amino-acid chain; its full sequence is Formin-like protein 18 (906 aa).

The N-terminal stretch at Met1 to Gly25 is a signal peptide. Residues Met120 to Phe140 form a helical membrane-spanning segment. Disordered regions lie at residues Ala267–Pro416 and Asn854–Asp906. The span at Ala274 to Pro292 shows a compositional bias: pro residues. Basic residues predominate over residues Ser293–Pro303. 3 stretches are compositionally biased toward pro residues: residues Ala320–Ser339, Gly348–Gly375, and Gly383–Lys402. Composition is skewed to low complexity over residues Lys403–Pro416 and Asn854–Phe877. The 456-residue stretch at Ala411 to Ala866 folds into the FH2 domain. Residues Arg878 to Ala889 show a composition bias toward basic and acidic residues. A compositionally biased stretch (low complexity) spans Ser897–Asp906.

This sequence belongs to the formin-like family. Class-I subfamily.

It is found in the membrane. In Oryza sativa subsp. japonica (Rice), this protein is Formin-like protein 18 (FH18).